The primary structure comprises 323 residues: RNA polymerase II holoenzyme cyclin-like subunit (323 aa).

Positions 45–176 (DSKQNGIEQS…LLEELESYLI (132 aa)) constitute a Cyclin N-terminal domain.

Belongs to the cyclin family. Cyclin C subfamily. In terms of assembly, component of the SRB8-11 complex which consists of SRB8, SSN2/SRB9, SSN3/SRB10 and SSN8/SRB11. The SRB8-11 complex associates with the Mediator complex. The SSN3/SRB10 and SSN8/SRB11 kinase-cyclin pair also associate with the RNA polymerase II holoenzyme. Interacts with ASK10.

Its subcellular location is the nucleus. Component of the SRB8-11 complex. The SRB8-11 complex is a regulatory module of the Mediator complex which is itself involved in regulation of basal and activated RNA polymerase II-dependent transcription. The SRB8-11 complex may be involved in the transcriptional repression of a subset of genes regulated by Mediator. It may inhibit the association of the Mediator complex with RNA polymerase II to form the holoenzyme complex. The SRB8-11 complex phosphorylates the C-terminal domain (CTD) of the largest subunit of RNA polymerase II RPB1 at serines 2 and 5. The SSN3/SRB10 and SSN8/SRB11 kinase-cyclin pair may also positively and negatively regulate numerous transcriptional activators in response to changes in nutritional and physiological conditions. In Saccharomyces cerevisiae (strain ATCC 204508 / S288c) (Baker's yeast), this protein is RNA polymerase II holoenzyme cyclin-like subunit (SSN8).